The primary structure comprises 743 residues: Homeobox-leucine zipper protein PROTODERMAL FACTOR 2 (743 aa).

Positions 1–72 (MYHPNMFESH…KKRYHRHTQR (72 aa)) are disordered. The segment covering 30-39 (SREDDFETKS) has biased composition (basic and acidic residues). Residues 60-71 (PNKKKRYHRHTQ) show a composition bias toward basic residues. A DNA-binding region (homeobox) is located at residues 62–121 (KKKRYHRHTQRQIQELESFFKECPHPDDKQRKELSRDLNLEPLQVKFWFQNKRTQMKAQS). The stretch at 110 to 192 (FQNKRTQMKA…DRISAIAAKY (83 aa)) forms a coiled coil. In terms of domain architecture, START spans 244-476 (SETDKPIIVE…LERQCERLAS (233 aa)).

Belongs to the HD-ZIP homeobox family. Class IV subfamily. As to quaternary structure, interacts with GAI/RGA2, RGA/RGA1/GRS, RGL2/SCL19 and ATML1. Binds to AIL7/PLT7, ANT, BBM and AIL1. In terms of tissue distribution, specifically expressed in the layer 1 (L1) of shoot meristems.

It is found in the nucleus. In terms of biological role, probable transcription factor that binds to the L1 box DNA sequence 5'-TAAATG[CT]A-3'. Plays a role in maintaining the identity of L1 cells, possibly by interacting with their L1 box or other target-gene promoters; binds to the LIP1 gene promoter and stimulates its expression upon imbibition. Acts as a positive regulator of gibberellins (GAs)-regulated epidermal gene expression (e.g. LIP1, LIP2, LTP1, FDH and PDF1). Functionally redundant to ATML1. Involved, together with HDG proteins (e.g. HDG1, HDG2, HDG5 and HDG12), in the regulation of flower organs development by promoting the expression of APETALA 3 (AP3) in the epidermis and internal cell layers of developing flowers. Seems to promote cell differentiation. This Arabidopsis thaliana (Mouse-ear cress) protein is Homeobox-leucine zipper protein PROTODERMAL FACTOR 2.